We begin with the raw amino-acid sequence, 934 residues long: UPF0182 protein sync_1321 (934 aa).

The next 9 helical transmembrane spans lie at 2 to 22 (AKIIWTIGRFGLLLIPLIVII), 45 to 65 (LLLQLGGALFAFLFVGSCALW), 86 to 106 (GYRYGFCLLACLLVLLSVLAI), 129 to 149 (FSTGWPLLSLSILMLTLIMFG), 165 to 185 (VCICLIVARSWGLWSLAFSIP), 208 to 228 (IAFGLELVLLQLSLTLSTALW), 251 to 271 (HGLRPGFALVLMSFSGLMWLS), 300 to 320 (LGSIALLVLAFVVLPSPFSSV), and 327 to 347 (LILAFIAIASFGLEMVLFPLM).

The protein belongs to the UPF0182 family.

The protein resides in the cell membrane. This is UPF0182 protein sync_1321 from Synechococcus sp. (strain CC9311).